The sequence spans 130 residues: Small ribosomal subunit protein uS9 (130 aa).

It belongs to the universal ribosomal protein uS9 family.

The protein is Small ribosomal subunit protein uS9 of Shewanella piezotolerans (strain WP3 / JCM 13877).